A 235-amino-acid chain; its full sequence is MKTKEDMQELYFPTPKLIEWENGVRQYSTVRGDTEVLMSYVPPHTNVEPHQHKEVQIGMVVSGELMMTVGDVTRKMTALESAYIAPPHVPHGARNDTDQEVIAIDIKRLKADETYTSPEDYFLDIFKTRDLLPGMEVTFFVEDWVEIMLAKIPGNGGEMPFHKHRNEQIGICIGGGYDMTVEGCTVEMKFGTAYFCEPREDHGAINRSEKESKSINIFFPPRYNRAKAKKMKADE.

2 Cupin type-2 domains span residues 41-106 (VPPH…AIDI) and 151-216 (KIPG…KSIN). A divalent metal cation is bound by residues His50, His52, Gln56, His91, His162, His164, Gln168, and His202. Position 223 (Tyr223) interacts with substrate.

Monomer. Requires Fe(2+) as cofactor. The cofactor is Co(2+).

Its subcellular location is the cytoplasm. It carries out the reaction 3-[(4R)-4-hydroxycyclohexa-1,5-dien-1-yl]-2-oxopropanoate = 3-[(1E,4R)-4-hydroxycyclohex-2-en-1-ylidene]pyruvate. The protein operates within antibiotic biosynthesis; bacilysin biosynthesis. Its function is as follows. Part of the bacABCDEF operon responsible for the biosynthesis of the nonribosomally synthesized dipeptide antibiotic bacilysin, composed of L-alanine and L-anticapsin. Bacilysin is an irreversible inactivator of the glutaminase domain of glucosamine synthetase. BacB catalyzes the allylic isomerization of the endocyclic-delta(4),delta(8)-7R-dihydro-hydroxyphenylpyruvate (en-H2HPP) to generate a mixture of 3E,7R- and 3Z, 7R-olefins (E/Z ration of 3/1) of the exocyclic-delta(3),delta(5)-dihydro-hydroxyphenylpyruvate (ex-H2HPP). The sequence is that of H2HPP isomerase from Bacillus subtilis (strain 168).